The chain runs to 186 residues: Ribosome-recycling factor (186 aa).

Belongs to the RRF family.

It is found in the cytoplasm. Its function is as follows. Responsible for the release of ribosomes from messenger RNA at the termination of protein biosynthesis. May increase the efficiency of translation by recycling ribosomes from one round of translation to another. The sequence is that of Ribosome-recycling factor from Bordetella petrii (strain ATCC BAA-461 / DSM 12804 / CCUG 43448).